Here is a 360-residue protein sequence, read N- to C-terminus: UDP-N-acetylglucosamine--N-acetylmuramyl-(pentapeptide) pyrophosphoryl-undecaprenol N-acetylglucosamine transferase (360 aa).

UDP-N-acetyl-alpha-D-glucosamine-binding residues include S198 and Q289.

This sequence belongs to the glycosyltransferase 28 family. MurG subfamily.

The protein localises to the cell membrane. It carries out the reaction Mur2Ac(oyl-L-Ala-gamma-D-Glu-L-Lys-D-Ala-D-Ala)-di-trans,octa-cis-undecaprenyl diphosphate + UDP-N-acetyl-alpha-D-glucosamine = beta-D-GlcNAc-(1-&gt;4)-Mur2Ac(oyl-L-Ala-gamma-D-Glu-L-Lys-D-Ala-D-Ala)-di-trans,octa-cis-undecaprenyl diphosphate + UDP + H(+). Its pathway is cell wall biogenesis; peptidoglycan biosynthesis. In terms of biological role, cell wall formation. Catalyzes the transfer of a GlcNAc subunit on undecaprenyl-pyrophosphoryl-MurNAc-pentapeptide (lipid intermediate I) to form undecaprenyl-pyrophosphoryl-MurNAc-(pentapeptide)GlcNAc (lipid intermediate II). The sequence is that of UDP-N-acetylglucosamine--N-acetylmuramyl-(pentapeptide) pyrophosphoryl-undecaprenol N-acetylglucosamine transferase from Streptococcus pyogenes serotype M18 (strain MGAS8232).